Here is a 495-residue protein sequence, read N- to C-terminus: Keratin, type II cytoskeletal 74 (495 aa).

The segment at 1 to 105 is head; it reads MASCHTAGHR…DPEIQKVRAQ (105 aa). The coil 1A stretch occupies residues 106-141; the sequence is EREQIKALNDKFASFIDKVRFLEQQNQVLQTKWELL. Residues 106-419 enclose the IF rod domain; the sequence is EREQIKALND…KLLEGEENRM (314 aa). The tract at residues 142-160 is linker 1; that stretch reads QQLDLSNCRRNLEPVYEAH. The interval 161-252 is coil 1B; that stretch reads ISNLRKQLEM…CLYDEEISQL (92 aa). Positions 253–276 are linker 12; that stretch reads QTHASETSVILSMDNNRDLDLAGI. The interval 277 to 415 is coil 2; sequence IAEVRAHYED…ATYRKLLEGE (139 aa). Residues 416–495 form a tail region; it reads ENRMSGENPS…AAGTLARKTT (80 aa). Residues 449–495 form a disordered region; sequence DSEAGNAVGSPSTPRNSQSKTRGSSVDPRDAQDESAAAAGTLARKTT. Over residues 457–472 the composition is skewed to polar residues; that stretch reads GSPSTPRNSQSKTRGS.

Belongs to the intermediate filament family. As to quaternary structure, heterotetramer of two type I and two type II keratins. As to expression, expressed in epidermis with a particularly strong staining in the nail matrix, nail bed and hyponychium (at protein level).

Its function is as follows. Has a role in hair formation. Specific component of keratin intermediate filaments in the inner root sheath (IRS) of the hair follicle. In Mus musculus (Mouse), this protein is Keratin, type II cytoskeletal 74.